The sequence spans 1197 residues: MYVLLTILTSVLVCEAIIRVSLSSTREETCFGDSTNPEMIEGAWDSLREEEMPEELSCSISGIREVKTSSQELYRALKAIIAADGLNNITCHGKDPEDKISLIKGPPHKKRVGIVRCERRRDAKQIGRKTMAGIAMTVLPALAVFALAPVVFAEDPHLRNRPGKGHNYIDGMTQEDATCKPVTYAGACSSFDVLLEKGKFPLFQSYAHHRTLLEAVHDTIIAKADPPSCDLLSAHGNPCMKEKLVMKTHCPNDYQSAHHLNNDGKMASVKCPPKYELTEDCNFCRQMTGASLKKGSYPLQDLFCQSSEDDGSKLKTKMKGVCEVGVQALKKCDGQLSTAHEVVPFAVFKNSKKVYLDKLDLKTEENLLPDSFVCFEHKGQYKGTMDSGQTKRELKSFDISQCPKIGGHGSKKCTGDAAFCSAYECTAQYANAYCSHANGSGIVQIQVSGVWKKPLCVGYERVVVKRELSAKPIQRVEPCTTCITKCEPHGLVVRSTGFKISSAVACASGVCVTGSQSPSTEITLKYPGISQSSGGDIGVHMAHDDQSVSSKIVAHCPPQDPCLVHDCIVCAHGLINYQCHTALSAFVVVFVFSSIAIICLAILYRVLKCLKIAPRKVLNPLMWITAFIRWIYKKMVARVADNINQVNREIGWMEGGQLVLGNPAPIPRHAPIPRYSTYLMLLLIVSYASACSELIQASSRITTCSTEGVNTKCRLSGTALIRAGSVGAEACLMLKGVKEDQTKFLKLKTVSSELSCREGQSYWTGSFSPKCLSSRRCHLVGECHVNRCLSWRDNETSAEFSFVGESTTMRENKCFEQCGGWGCGCFNVNPSCLFVHTYLQSVRKEALRVFNCIDWVHKLTLEITDFDGSVSTIDLGASSSRFTNWGSVSLSLDAEGISGSNSFSFIESPGKGYAIVDEPFSEIPRQGFLGEIRCNSESSVLSAHESCLRAPNLISYKPMIDQLECTTNLIDPFVVFERGSLPQTRNDKTFAASKGNRGVQAFSKGSVQADLTLMFDNFEVDFVGAAVSCDAAFLNLTGCYSCNAGARVCLSITSTGTGSLSAHNKDGSLHIVLPSENGTKDQCQILHFTVPEVEEEFMYSCDGDERPLLVKGTLIAIDPFDDRREAGGESTVVNPKSGSWNFFDWFSGLMSWFGGPLKTILLICLYVALSIGLFFLLIYLGGTGLSKMWLAATKKAS.

An N-terminal signal peptide occupies residues 1-16 (MYVLLTILTSVLVCEA). Topologically, residues 17 to 130 (IIRVSLSSTR…RDAKQIGRKT (114 aa)) are cytoplasmic. An internal signal sequence for glycoprotein N region spans residues 131-153 (MAGIAMTVLPALAVFALAPVVFA). Topologically, residues 154-582 (EDPHLRNRPG…GLINYQCHTA (429 aa)) are lumenal. Cystine bridges form between Cys179–Cys188, Cys229–Cys239, Cys250–Cys281, Cys271–Cys284, Cys304–Cys456, Cys322–Cys332, Cys374–Cys434, Cys402–Cys413, Cys420–Cys425, Cys479–Cys482, Cys486–Cys556, and Cys506–Cys511. Residues 583 to 603 (LSAFVVVFVFSSIAIICLAIL) traverse the membrane as a helical segment. Residues 604-673 (YRVLKCLKIA…APIPRHAPIP (70 aa)) lie on the Cytoplasmic side of the membrane. Residues 608–650 (KCLKIAPRKVLNPLMWITAFIRWIYKKMVARVADNINQVNREI) are golgi retention signal. The interval 646–650 (VNREI) is important for correct targeting of the glycoproteins to the Golgi complex but not for heterodimerization. The segment at 675–690 (YSTYLMLLLIVSYASA) is internal signal sequence for glycoprotein C. 12 cysteine pairs are disulfide-bonded: Cys691-Cys731, Cys704-Cys713, Cys756-Cys852, Cys771-Cys965, Cys777-Cys825, Cys783-Cys832, Cys788-Cys814, Cys818-Cys823, Cys934-Cys947, Cys1029-Cys1101, Cys1039-Cys1042, and Cys1049-Cys1083. Residues 691-1159 (CSELIQASSR…MSWFGGPLKT (469 aa)) are Lumenal-facing. Residues 777–783 (CHLVGEC) form a fusion loop region. Asn794 carries N-linked (GlcNAc...) asparagine; by host glycosylation. Residues 819 to 830 (GGWGCGCFNVNP) are fusion loop. The N-linked (GlcNAc...) asparagine; by host glycan is linked to Asn1035. N-linked (GlcNAc...) asparagine; by host glycosylation is present at Asn1077. A helical membrane pass occupies residues 1160–1180 (ILLICLYVALSIGLFFLLIYL). The Cytoplasmic portion of the chain corresponds to 1181 to 1197 (GGTGLSKMWLAATKKAS).

The protein belongs to the phlebovirus envelope glycoprotein family. Heterodimer with glycoprotein C. Homotrimer (postfusion). Interacts with nucleocapsid protein N and with the polymerase L in order to package them into virus particles. Interacts with host E3 ubiquitin-protein ligase UBR4; this interaction is important for viral RNA production. Interacts with host LRP1; this interaction facilitates virus entry into the host cell. As to quaternary structure, heterodimer with glycoprotein C. Post-translationally, specific enzymatic cleavages in vivo yield mature proteins including NSm protein, Glycoprotein C, and Glycoprotein N. In terms of processing, glycosylated. The glycans can attach to host CD209/DC-SIGN, and may play a role in virus entry into dendritic cells. Palmitoylated.

It is found in the virion membrane. The protein localises to the host Golgi apparatus membrane. Its subcellular location is the host endoplasmic reticulum membrane. It localises to the host mitochondrion outer membrane. The protein resides in the host Golgi apparatus. It is found in the virion. Structural component of the virion that interacts with glycoprotein C. It shields the hydrophobic fusion loops of the glycoprotein C, preventing premature fusion. The glycoprotein protrusions are arranged on an icosahedral lattice, with T=12 triangulation. They are able to attach the virion to the host cell receptor CD209/DC-SIGN and to promote fusion of membranes with the late endosome after endocytosis of the virion. Plays a role in the packaging of ribonucleoproteins and polymerase during virus assembly. Its function is as follows. Structural component of the virion that interacts with glycoprotein N. Acts as a class II fusion protein that is activated upon acidification and subsequent repositioning of the glycoprotein N. The glycoprotein protrusions are arranged on an icosahedral lattice, with T=12 triangulation. They are able to attach the virion to the host cell receptor CD209/DC-SIGN and to promote fusion of membranes with the late endosome after endocytosis of the virion. In terms of biological role, plays a role in the inhibition of virus-induced apoptosis. Plays a role for virus dissemination in vertebrates. Functionally, plays a role for virus dissemination in mosquitoes. May act as a structural virion protein in insects. The polypeptide is Envelopment polyprotein (GP) (Rift valley fever virus (strain ZH-548 M12) (RVFV)).